The primary structure comprises 1238 residues: Virulence sensor protein BvgS (1238 aa).

Residues 1–30 (MPAPHRLYPRSLICLAQALLAWALLAWAPA) form the signal peptide. Topologically, residues 33 to 307 (SQELTLVGKA…REQQWMANHP (275 aa)) are cytoplasmic. Residues 308–331 (VVKVAVLNLFAPFTLFRTDEQFGG) traverse the membrane as a helical segment. At 332-541 (ISAAVLQLLQ…PRTWYAYRNE (210 aa)) the chain is on the periplasmic side. A helical membrane pass occupies residues 542–563 (IYLLIGLGLLSALLFLSWIVYL). Residues 564 to 1238 (RRQIRQRKRA…LEQRPHQGQP (675 aa)) lie on the Cytoplasmic side of the membrane. In terms of domain architecture, PAS spans 580 to 651 (QLEFMRVLID…MHEFLLTRMS (72 aa)). The PAC domain occupies 652–708 (AEREPRFEDRDVTLHGRTRHVYQWTVPYGDSLGELKGIIGGWIDITERAELLRELHD). The Histidine kinase domain occupies 726 to 948 (TMSHEIRTPM…TVSVDLRLTM (223 aa)). Histidine 729 is subject to Phosphohistidine; by autocatalysis. In terms of domain architecture, Response regulatory spans 974-1095 (RVLVVDDHKP…ALRQRLNEAA (122 aa)). Aspartate 1023 is subject to 4-aspartylphosphate. In terms of domain architecture, HPt spans 1133-1228 (DEALIRQLLE…AALETQLRAW (96 aa)). Phosphohistidine is present on histidine 1172.

Post-translationally, activation requires a sequential transfer of a phosphate group from a His in the primary transmitter domain, to an Asp in the receiver domain and to a His in the secondary transmitter domain.

Its subcellular location is the cell inner membrane. The enzyme catalyses ATP + protein L-histidine = ADP + protein N-phospho-L-histidine.. In terms of biological role, member of the two-component regulatory system BvgS/BvgA. Phosphorylates BvgA via a four-step phosphorelay in response to environmental signals. The protein is Virulence sensor protein BvgS (bvgS) of Bordetella bronchiseptica (strain ATCC BAA-588 / NCTC 13252 / RB50) (Alcaligenes bronchisepticus).